A 325-amino-acid polypeptide reads, in one-letter code: Ribosomal RNA small subunit methyltransferase H (325 aa).

S-adenosyl-L-methionine contacts are provided by residues 42–44 (GGH), Asp62, Phe86, Asp105, and Gln112.

This sequence belongs to the methyltransferase superfamily. RsmH family.

The protein localises to the cytoplasm. It carries out the reaction cytidine(1402) in 16S rRNA + S-adenosyl-L-methionine = N(4)-methylcytidine(1402) in 16S rRNA + S-adenosyl-L-homocysteine + H(+). Its function is as follows. Specifically methylates the N4 position of cytidine in position 1402 (C1402) of 16S rRNA. The polypeptide is Ribosomal RNA small subunit methyltransferase H (Cupriavidus metallidurans (strain ATCC 43123 / DSM 2839 / NBRC 102507 / CH34) (Ralstonia metallidurans)).